The primary structure comprises 255 residues: Small ribosomal subunit protein eS4 (255 aa).

The region spanning I43–I115 is the S4 RNA-binding domain.

The protein belongs to the eukaryotic ribosomal protein eS4 family.

This is Small ribosomal subunit protein eS4 from Hyperthermus butylicus (strain DSM 5456 / JCM 9403 / PLM1-5).